Reading from the N-terminus, the 349-residue chain is Phenylalanine--tRNA ligase alpha subunit (349 aa).

Glu-258 provides a ligand contact to Mg(2+).

This sequence belongs to the class-II aminoacyl-tRNA synthetase family. Phe-tRNA synthetase alpha subunit type 1 subfamily. Tetramer of two alpha and two beta subunits. Mg(2+) serves as cofactor.

The protein localises to the cytoplasm. It catalyses the reaction tRNA(Phe) + L-phenylalanine + ATP = L-phenylalanyl-tRNA(Phe) + AMP + diphosphate + H(+). The chain is Phenylalanine--tRNA ligase alpha subunit from Rickettsia felis (strain ATCC VR-1525 / URRWXCal2) (Rickettsia azadi).